A 301-amino-acid polypeptide reads, in one-letter code: Protease HtpX homolog (301 aa).

Helical transmembrane passes span 11-31 and 34-54; these read VLLL…IAGA and NSAF…YSYW. His-138 is a binding site for Zn(2+). The active site involves Glu-139. His-142 is a Zn(2+) binding site. 2 helical membrane-spanning segments follow: residues 154-174 and 188-208; these read AAAV…AAIF and LVGL…QLAI. Zn(2+) is bound at residue Glu-213.

This sequence belongs to the peptidase M48B family. It depends on Zn(2+) as a cofactor.

The protein resides in the cell membrane. In Kocuria rhizophila (strain ATCC 9341 / DSM 348 / NBRC 103217 / DC2201), this protein is Protease HtpX homolog.